The primary structure comprises 548 residues: Chaperonin GroEL (548 aa).

ATP is bound by residues 30–33 (TLGP), Lys-51, 87–91 (DGTTT), Gly-415, 479–481 (NAA), and Asp-495.

It belongs to the chaperonin (HSP60) family. In terms of assembly, forms a cylinder of 14 subunits composed of two heptameric rings stacked back-to-back. Interacts with the co-chaperonin GroES.

Its subcellular location is the cytoplasm. The catalysed reaction is ATP + H2O + a folded polypeptide = ADP + phosphate + an unfolded polypeptide.. Its function is as follows. Together with its co-chaperonin GroES, plays an essential role in assisting protein folding. The GroEL-GroES system forms a nano-cage that allows encapsulation of the non-native substrate proteins and provides a physical environment optimized to promote and accelerate protein folding. The chain is Chaperonin GroEL from Aliivibrio fischeri (strain MJ11) (Vibrio fischeri).